We begin with the raw amino-acid sequence, 116 residues long: MSALDPAVASRLKRNADGLFTAVVQERATGQVLMVAWMDDDALARTLETREATYFSRSRGEQWVKGLTSGHTQRVHSVRLDCDGDTVLLEVDQVGGACHTGDHTCFDADLLLGPDL.

Mg(2+) is bound at residue D81. C82 is a Zn(2+) binding site. The Mg(2+) site is built by D83 and D85. Zn(2+)-binding residues include C98 and C105.

Belongs to the PRA-CH family. Homodimer. Requires Mg(2+) as cofactor. It depends on Zn(2+) as a cofactor.

Its subcellular location is the cytoplasm. The catalysed reaction is 1-(5-phospho-beta-D-ribosyl)-5'-AMP + H2O = 1-(5-phospho-beta-D-ribosyl)-5-[(5-phospho-beta-D-ribosylamino)methylideneamino]imidazole-4-carboxamide. Its pathway is amino-acid biosynthesis; L-histidine biosynthesis; L-histidine from 5-phospho-alpha-D-ribose 1-diphosphate: step 3/9. In terms of biological role, catalyzes the hydrolysis of the adenine ring of phosphoribosyl-AMP. This is Phosphoribosyl-AMP cyclohydrolase from Mycolicibacterium vanbaalenii (strain DSM 7251 / JCM 13017 / BCRC 16820 / KCTC 9966 / NRRL B-24157 / PYR-1) (Mycobacterium vanbaalenii).